Reading from the N-terminus, the 466-residue chain is Putative proline/betaine transporter (466 aa).

12 helical membrane passes run 20–42 (VVATGIGNAMEWFDFGVYAYTTA), 63–83 (FAALAIAFLLRPIGGVVFGII), 91–111 (VVLTSTIILMAFSTLTIGLLP), 116–136 (IGLWAPILLLLARVLQGFSTG), 164–184 (IGTLSGYIAASIMIAVLTFFL), 191–211 (SFGWRIPFLLGLFLGLFGLYL), 247–267 (IFVCFVAVVFFNVTNYMVTAY), 285–305 (VLITCVMAIMIPLALMFGKLA), 313–332 (VFLIGTGGLTLFSIIAFMLL), 337–354 (FVVIVIGIFILGFFLSTY), 377–397 (VTFNISVSIFGGTTPLVATWL), and 405–425 (LAPAYYLTAISVIGFLVITFL).

It belongs to the major facilitator superfamily. Metabolite:H+ Symporter (MHS) family (TC 2.A.1.6) family.

The protein resides in the cell membrane. In terms of biological role, may be a proton symporter involved in the uptake of osmolytes such as proline and glycine betaine. The polypeptide is Putative proline/betaine transporter (proP) (Staphylococcus aureus (strain Mu3 / ATCC 700698)).